A 486-amino-acid polypeptide reads, in one-letter code: O-methyltransferase gedA (486 aa).

S-adenosyl-L-methionine is bound by residues 298–299, Asp321, 353–354, and Arg369; these read GG and SF. His373 (proton acceptor) is an active-site residue.

The protein belongs to the class I-like SAM-binding methyltransferase superfamily. Cation-independent O-methyltransferase family.

It carries out the reaction emodin + S-adenosyl-L-methionine = questin + S-adenosyl-L-homocysteine + H(+). It functions in the pathway secondary metabolite biosynthesis. Its function is as follows. O-methyltransferase; part of the gene cluster that mediates the biosynthesis of geodin, an intermediate in the biosynthesis of other natural products. The pathway begins with the synthesis of atrochrysone thioester by the polyketide synthase (PKS) gedC. The atrochrysone carboxyl ACP thioesterase gedB then breaks the thioester bond and releases the atrochrysone carboxylic acid from gedC. The atrochrysone carboxylic acid is then converted to atrochrysone which is further transformed into emodinanthrone. The next step is performed by the emodinanthrone oxygenase gedH that catalyzes the oxidation of emodinanthrone to emodin. Emodin O-methyltransferase encoded probably by gedA then catalyzes methylation of the 8-hydroxy group of emodin to form questin. Ring cleavage of questin by questin oxidase gedK leads to desmethylsulochrin via several intermediates including questin epoxide. Another methylation step probably catalyzed by methyltransferase gedG leads to the formation of sulochrin which is further converted to dihydrogeodin by the sulochrin halogenase gedL. Finally, the dihydrogeodin oxidase gedJ catalyzes the stereospecific phenol oxidative coupling reaction converting dihydrogeodin to geodin. The protein is O-methyltransferase gedA of Aspergillus terreus (strain NIH 2624 / FGSC A1156).